A 668-amino-acid chain; its full sequence is tRNA 5-methylaminomethyl-2-thiouridine biosynthesis bifunctional protein MnmC (668 aa).

Residues 1–245 (MKHYSIQPAN…KREMLCGVME (245 aa)) are tRNA (mnm(5)s(2)U34)-methyltransferase. The FAD-dependent cmnm(5)s(2)U34 oxidoreductase stretch occupies residues 270-668 (IGGGIASALL…LLKGKAVKAG (399 aa)).

It in the N-terminal section; belongs to the methyltransferase superfamily. tRNA (mnm(5)s(2)U34)-methyltransferase family. The protein in the C-terminal section; belongs to the DAO family. The cofactor is FAD.

The protein localises to the cytoplasm. The enzyme catalyses 5-aminomethyl-2-thiouridine(34) in tRNA + S-adenosyl-L-methionine = 5-methylaminomethyl-2-thiouridine(34) in tRNA + S-adenosyl-L-homocysteine + H(+). Functionally, catalyzes the last two steps in the biosynthesis of 5-methylaminomethyl-2-thiouridine (mnm(5)s(2)U) at the wobble position (U34) in tRNA. Catalyzes the FAD-dependent demodification of cmnm(5)s(2)U34 to nm(5)s(2)U34, followed by the transfer of a methyl group from S-adenosyl-L-methionine to nm(5)s(2)U34, to form mnm(5)s(2)U34. The polypeptide is tRNA 5-methylaminomethyl-2-thiouridine biosynthesis bifunctional protein MnmC (Shigella flexneri serotype 5b (strain 8401)).